The following is a 186-amino-acid chain: Pyridoxal 5'-phosphate synthase subunit PdxT (186 aa).

46–48 (GES) contributes to the L-glutamine binding site. The active-site Nucleophile is C78. Residues R105 and 134–135 (IR) each bind L-glutamine. Catalysis depends on charge relay system residues H170 and E172.

Belongs to the glutaminase PdxT/SNO family. In terms of assembly, in the presence of PdxS, forms a dodecamer of heterodimers. Only shows activity in the heterodimer.

The enzyme catalyses aldehydo-D-ribose 5-phosphate + D-glyceraldehyde 3-phosphate + L-glutamine = pyridoxal 5'-phosphate + L-glutamate + phosphate + 3 H2O + H(+). It carries out the reaction L-glutamine + H2O = L-glutamate + NH4(+). It participates in cofactor biosynthesis; pyridoxal 5'-phosphate biosynthesis. Catalyzes the hydrolysis of glutamine to glutamate and ammonia as part of the biosynthesis of pyridoxal 5'-phosphate. The resulting ammonia molecule is channeled to the active site of PdxS. This chain is Pyridoxal 5'-phosphate synthase subunit PdxT, found in Clostridium acetobutylicum (strain ATCC 824 / DSM 792 / JCM 1419 / IAM 19013 / LMG 5710 / NBRC 13948 / NRRL B-527 / VKM B-1787 / 2291 / W).